Reading from the N-terminus, the 255-residue chain is Large ribosomal subunit protein uL2 (255 aa).

The segment at 201 to 229 (YAHPHGGGSHQQGGTPVKKNAPPGQKVGF) is disordered.

The protein belongs to the universal ribosomal protein uL2 family. Part of the 50S ribosomal subunit. Forms a bridge to the 30S subunit in the 70S ribosome.

Functionally, one of the primary rRNA binding proteins. Required for association of the 30S and 50S subunits to form the 70S ribosome, for tRNA binding and peptide bond formation. It has been suggested to have peptidyltransferase activity; this is somewhat controversial. Makes several contacts with the 16S rRNA in the 70S ribosome. This chain is Large ribosomal subunit protein uL2, found in Caldivirga maquilingensis (strain ATCC 700844 / DSM 13496 / JCM 10307 / IC-167).